The chain runs to 332 residues: Glycerol-3-phosphate dehydrogenase [NAD(P)+] (332 aa).

Residues W11, R30, and K108 each coordinate NADPH. 3 residues coordinate sn-glycerol 3-phosphate: K108, G137, and S139. An NADPH-binding site is contributed by A141. Sn-glycerol 3-phosphate contacts are provided by K192, D245, S255, R256, and N257. K192 acts as the Proton acceptor in catalysis. An NADPH-binding site is contributed by R256. V280 and E282 together coordinate NADPH.

Belongs to the NAD-dependent glycerol-3-phosphate dehydrogenase family.

It is found in the cytoplasm. The catalysed reaction is sn-glycerol 3-phosphate + NAD(+) = dihydroxyacetone phosphate + NADH + H(+). It catalyses the reaction sn-glycerol 3-phosphate + NADP(+) = dihydroxyacetone phosphate + NADPH + H(+). It functions in the pathway membrane lipid metabolism; glycerophospholipid metabolism. Its function is as follows. Catalyzes the reduction of the glycolytic intermediate dihydroxyacetone phosphate (DHAP) to sn-glycerol 3-phosphate (G3P), the key precursor for phospholipid synthesis. The protein is Glycerol-3-phosphate dehydrogenase [NAD(P)+] of Paraburkholderia phymatum (strain DSM 17167 / CIP 108236 / LMG 21445 / STM815) (Burkholderia phymatum).